Consider the following 125-residue polypeptide: uncharacterized protein (125 aa).

The region spanning 14–112 (CPVEFTLDVI…WGESNRDVLE (99 aa)) is the HTH hxlR-type domain.

This is an uncharacterized protein from Bacillus subtilis (strain 168).